Here is a 219-residue protein sequence, read N- to C-terminus: Transmembrane protein 125 (219 aa).

A run of 4 helical transmembrane segments spans residues 36-56 (LCFV…VALL), 68-88 (LATG…QLMS), 114-134 (ALVV…LAGL), and 147-167 (MLSV…GLLL).

The protein localises to the membrane. The polypeptide is Transmembrane protein 125 (TMEM125) (Homo sapiens (Human)).